Reading from the N-terminus, the 713-residue chain is Protein argonaute (713 aa).

An N-terminal domain region spans residues 18 to 129 (EFIPKEVHFY…IKNIRKHKVV (112 aa)). One can recognise a PAZ domain in the interval 164–257 (HLWDFVNRDK…FAPQFCNLVF (94 aa)). The tract at residues 213–218 (HIIKYY) is binds 3'-end of gDNA. A mid domain region spans residues 346–488 (DVPEIIRNKN…QIMGKLGIKY (143 aa)). The region spanning 426 to 699 (CFALIIGKEK…FVKALGKNWK (274 aa)) is the Piwi domain. The a divalent metal cation site is built by Gln457, Gln479, and Lys483. The segment at 457-460 (QNIL) is binds 5'-phosphorylated end of gDNA. Active-site residues include Asp504, Glu541, and Asp570. Asp504 contacts Mn(2+). Asp570 lines the Mn(2+) pocket. Binds 5'-phosphorylated end of gDNA stretches follow at residues 625–632 (HKTPFGSN) and 678–679 (LR). The active site involves Asp688. Asp688 and Ile713 together coordinate Mn(2+).

It belongs to the argonaute family. Long pAgo subfamily. It depends on a divalent metal cation as a cofactor.

With respect to regulation, DNA cleavage is inhibited by EDTA. A DNA-guided ssDNA endonuclease that may play a role in defense against invading genetic elements. Uses short ssDNA sequences as guides (gDNA) to bind complementary target strands, resulting in slicing of the target DNA (tDNA). Endonucleolytically cleaves tDNA (the gDNA indicates where to cleave); two major and two minor products are seen which correspond to cleavage sites between nucleotides 9/10, 10/11, 13/14, and 14/15 downstream of the target residue base-paired with the 5'-end of the gDNA. Efficient guide-dependent tDNA cleavage requires a minimal length of 15 bp and is maximal at 19 bp. Prefers gDNA with 5'-phosphorylated purines and 3'-pyrimidines; changing these bases alters the cleavage activity and patterns. Also has guide-independent activity on tDNA called 'chopping'. Probably a first round of guide-independent activity on an invading plasmid or virus would generate guide DNAs for subsequent, more efficient, guide-dependent degradation of invading nucleic acids. Has no activity on substrate with a mismatch at positions 10 and 11, on ssDNA or RNA, nor on DNA:RNA hybrids. Digests longer (750 bp) dsDNA as well as circular plasmid and naked genomic DNA, but not chromatin, in a guide DNA-independent manner. Addition of endogenous histone A3 protects DNA from cleavage, while cleavage is insensitive to methylation. When plasmid encoding active or mutated protein (Ala-541) is transformed into Sulfolobus acidocaldarius about 25-fold fewer transformants are found with active protein; reduced levels of plasmid are found in wild-type transformed cells. While S.acidocaldarius grows at a similar temperature to M.jannaschii (70 to 80 degrees Celsius) it has very different histone-like proteins, which presumably do not protect against MjAgo. Binds ssDNA, dsDNA and DNA-RNA hybrids; binding is most efficient with dsDNA. In Methanocaldococcus jannaschii (strain ATCC 43067 / DSM 2661 / JAL-1 / JCM 10045 / NBRC 100440) (Methanococcus jannaschii), this protein is Protein argonaute.